The primary structure comprises 39 residues: Omega-theraphotoxin-Ba1a (39 aa).

3 cysteine pairs are disulfide-bonded: C4-C25, C8-C31, and C17-C36.

It belongs to the neurotoxin 12 (Hwtx-2) family. 06 (TXP1) subfamily. As to expression, expressed by the venom gland.

The protein localises to the secreted. Its function is as follows. Inhibits voltage-gated calcium channels (Cav) in rat cerebellar granule cells. Has insecticidal activity to crickets (Acheta domesticus). Is not toxic to mice. The protein is Omega-theraphotoxin-Ba1a of Brachypelma albiceps (Mexican golden redrump tarantula).